We begin with the raw amino-acid sequence, 123 residues long: Large ribosomal subunit protein bL12 (123 aa).

Belongs to the bacterial ribosomal protein bL12 family. As to quaternary structure, homodimer. Part of the ribosomal stalk of the 50S ribosomal subunit. Forms a multimeric L10(L12)X complex, where L10 forms an elongated spine to which 2 to 4 L12 dimers bind in a sequential fashion. Binds GTP-bound translation factors.

In terms of biological role, forms part of the ribosomal stalk which helps the ribosome interact with GTP-bound translation factors. Is thus essential for accurate translation. This is Large ribosomal subunit protein bL12 from Acinetobacter baumannii (strain AB307-0294).